A 376-amino-acid chain; its full sequence is Glutamate 5-kinase (376 aa).

Lys-23 lines the ATP pocket. Substrate is bound by residues Ser-63, Asp-150, and Asn-162. ATP-binding positions include 182-183 and 222-228; these read SD and TGGMASK. The PUA domain maps to 284-358; sequence GGALRIDAGA…GKQTAQLPEG (75 aa).

It belongs to the glutamate 5-kinase family.

The protein localises to the cytoplasm. It carries out the reaction L-glutamate + ATP = L-glutamyl 5-phosphate + ADP. It participates in amino-acid biosynthesis; L-proline biosynthesis; L-glutamate 5-semialdehyde from L-glutamate: step 1/2. In terms of biological role, catalyzes the transfer of a phosphate group to glutamate to form L-glutamate 5-phosphate. The polypeptide is Glutamate 5-kinase (Corynebacterium diphtheriae (strain ATCC 700971 / NCTC 13129 / Biotype gravis)).